The chain runs to 247 residues: ATP synthase subunit a, chloroplastic (247 aa).

A run of 5 helical transmembrane segments spans residues 38–58, 95–115, 134–154, 199–219, and 220–240; these read QVLI…TVAV, VPFI…GALL, INTT…AGLT, LVVV…VMFL, and GLFT…AYIG.

This sequence belongs to the ATPase A chain family. F-type ATPases have 2 components, CF(1) - the catalytic core - and CF(0) - the membrane proton channel. CF(1) has five subunits: alpha(3), beta(3), gamma(1), delta(1), epsilon(1). CF(0) has four main subunits: a, b, b' and c.

The protein localises to the plastid. The protein resides in the chloroplast thylakoid membrane. Key component of the proton channel; it plays a direct role in the translocation of protons across the membrane. In Acorus calamus var. americanus (American sweet flag), this protein is ATP synthase subunit a, chloroplastic.